Here is a 134-residue protein sequence, read N- to C-terminus: Small ribosomal subunit protein bS6 (134 aa).

The tract at residues 99–134 is disordered; the sequence is EPSAMMQKRDRDERKDRERGRRRDDDGYVGERNEEG. Positions 105-134 are enriched in basic and acidic residues; sequence QKRDRDERKDRERGRRRDDDGYVGERNEEG.

Belongs to the bacterial ribosomal protein bS6 family.

Functionally, binds together with bS18 to 16S ribosomal RNA. The protein is Small ribosomal subunit protein bS6 of Methylobacterium sp. (strain 4-46).